Here is a 715-residue protein sequence, read N- to C-terminus: Polyribonucleotide nucleotidyltransferase (715 aa).

Mg(2+)-binding residues include aspartate 495 and aspartate 501. The region spanning 562-621 is the KH domain; the sequence is PRLLTLQIPPDMIGLVIGPGGKTVRGISEQYNVKVDISEEGLVTITAPNETNAKQARAAI. Positions 631 to 699 constitute an S1 motif domain; the sequence is GDVYLGRVTR…SKGRINLTRL (69 aa).

It belongs to the polyribonucleotide nucleotidyltransferase family. It depends on Mg(2+) as a cofactor.

Its subcellular location is the cytoplasm. It catalyses the reaction RNA(n+1) + phosphate = RNA(n) + a ribonucleoside 5'-diphosphate. In terms of biological role, involved in mRNA degradation. Catalyzes the phosphorolysis of single-stranded polyribonucleotides processively in the 3'- to 5'-direction. This chain is Polyribonucleotide nucleotidyltransferase, found in Thermosynechococcus vestitus (strain NIES-2133 / IAM M-273 / BP-1).